The following is a 141-amino-acid chain: Nucleoside diphosphate kinase (141 aa).

Lys11, Tyr59, Arg87, Thr93, Arg104, and Asn114 together coordinate ATP. His117 (pros-phosphohistidine intermediate) is an active-site residue.

It belongs to the NDK family. Homotetramer. The cofactor is Mg(2+).

The protein resides in the cytoplasm. It carries out the reaction a 2'-deoxyribonucleoside 5'-diphosphate + ATP = a 2'-deoxyribonucleoside 5'-triphosphate + ADP. It catalyses the reaction a ribonucleoside 5'-diphosphate + ATP = a ribonucleoside 5'-triphosphate + ADP. Major role in the synthesis of nucleoside triphosphates other than ATP. The ATP gamma phosphate is transferred to the NDP beta phosphate via a ping-pong mechanism, using a phosphorylated active-site intermediate. The chain is Nucleoside diphosphate kinase from Orientia tsutsugamushi (strain Boryong) (Rickettsia tsutsugamushi).